We begin with the raw amino-acid sequence, 440 residues long: Light-independent protochlorophyllide reductase subunit B (440 aa).

A [4Fe-4S] cluster-binding site is contributed by aspartate 36. A substrate-binding site is contributed by 427–428 (KD).

This sequence belongs to the ChlB/BchB/BchZ family. Protochlorophyllide reductase is composed of three subunits; ChlL, ChlN and ChlB. Forms a heterotetramer of two ChlB and two ChlN subunits. Requires [4Fe-4S] cluster as cofactor.

The protein localises to the plastid. The protein resides in the cyanelle. It catalyses the reaction chlorophyllide a + oxidized 2[4Fe-4S]-[ferredoxin] + 2 ADP + 2 phosphate = protochlorophyllide a + reduced 2[4Fe-4S]-[ferredoxin] + 2 ATP + 2 H2O. It participates in porphyrin-containing compound metabolism; chlorophyll biosynthesis (light-independent). Functionally, component of the dark-operative protochlorophyllide reductase (DPOR) that uses Mg-ATP and reduced ferredoxin to reduce ring D of protochlorophyllide (Pchlide) to form chlorophyllide a (Chlide). This reaction is light-independent. The NB-protein (ChlN-ChlB) is the catalytic component of the complex. The protein is Light-independent protochlorophyllide reductase subunit B of Cyanophora paradoxa.